Here is a 122-residue protein sequence, read N- to C-terminus: Large ribosomal subunit protein uL14 (122 aa).

The protein belongs to the universal ribosomal protein uL14 family. As to quaternary structure, part of the 50S ribosomal subunit. Forms a cluster with proteins L3 and L19. In the 70S ribosome, L14 and L19 interact and together make contacts with the 16S rRNA in bridges B5 and B8.

Its function is as follows. Binds to 23S rRNA. Forms part of two intersubunit bridges in the 70S ribosome. The sequence is that of Large ribosomal subunit protein uL14 from Nitrosospira multiformis (strain ATCC 25196 / NCIMB 11849 / C 71).